Reading from the N-terminus, the 463-residue chain is Cysteine--tRNA ligase (463 aa).

Cys-27 is a Zn(2+) binding site. The 'HIGH' region signature appears at Ala-29–His-39. Residues Cys-205, His-230, and Glu-234 each contribute to the Zn(2+) site. Residues Lys-261–Ser-265 carry the 'KMSKS' region motif. Lys-264 provides a ligand contact to ATP.

It belongs to the class-I aminoacyl-tRNA synthetase family. As to quaternary structure, monomer. Requires Zn(2+) as cofactor.

It localises to the cytoplasm. It catalyses the reaction tRNA(Cys) + L-cysteine + ATP = L-cysteinyl-tRNA(Cys) + AMP + diphosphate. This Mycolicibacterium vanbaalenii (strain DSM 7251 / JCM 13017 / BCRC 16820 / KCTC 9966 / NRRL B-24157 / PYR-1) (Mycobacterium vanbaalenii) protein is Cysteine--tRNA ligase.